The following is a 354-amino-acid chain: S-adenosylmethionine:tRNA ribosyltransferase-isomerase (354 aa).

Belongs to the QueA family. As to quaternary structure, monomer.

It localises to the cytoplasm. The catalysed reaction is 7-aminomethyl-7-carbaguanosine(34) in tRNA + S-adenosyl-L-methionine = epoxyqueuosine(34) in tRNA + adenine + L-methionine + 2 H(+). The protein operates within tRNA modification; tRNA-queuosine biosynthesis. Its function is as follows. Transfers and isomerizes the ribose moiety from AdoMet to the 7-aminomethyl group of 7-deazaguanine (preQ1-tRNA) to give epoxyqueuosine (oQ-tRNA). The sequence is that of S-adenosylmethionine:tRNA ribosyltransferase-isomerase from Klebsiella pneumoniae (strain 342).